Here is a 691-residue protein sequence, read N- to C-terminus: Protein phosphatase 1 regulatory subunit 37 (691 aa).

Residues 1–43 (MEIAPQEAPPVPGADGDIEEAPAEAGSPSPASPPADGRLKAAA) form a disordered region. Residues S50 and S56 each carry the phosphoserine modification. LRR repeat units follow at residues 220–240 (SLAV…MLLA), 248–269 (NLRE…AQLG), 277–297 (SLQI…AYIC), 306–326 (GLVT…AFLG), and 334–354 (SLET…RHLK). Residues 460–662 (EREEKEQPPQ…PEVKGGSCGL (203 aa)) are disordered. Over residues 468 to 481 (PQLSASMPETTATE) the composition is skewed to polar residues. The segment covering 505–523 (SDSDSDSDGEEEEEEEGER) has biased composition (acidic residues). Position 561 is a phosphoserine (S561). 2 stretches are compositionally biased toward pro residues: residues 584–605 (PASP…PSLP) and 620–634 (PQPP…PPLP).

Belongs to the PPP1R37 family. Interacts with PPP1CA.

Functionally, inhibits phosphatase activity of protein phosphatase 1 (PP1) complexes. The polypeptide is Protein phosphatase 1 regulatory subunit 37 (PPP1R37) (Homo sapiens (Human)).